Here is a 69-residue protein sequence, read N- to C-terminus: Protein translocase subunit SecE (69 aa).

A helical membrane pass occupies residues 43 to 63 (GLGICLLGFVGFVIHVPITYL).

Belongs to the SecE/SEC61-gamma family. As to quaternary structure, component of the Sec protein translocase complex. Heterotrimer consisting of SecY (alpha), SecG (beta) and SecE (gamma) subunits. The heterotrimers can form oligomers, although 1 heterotrimer is thought to be able to translocate proteins. Interacts with the ribosome. May interact with SecDF, and other proteins may be involved.

It localises to the cell membrane. Essential subunit of the Sec protein translocation channel SecYEG. Clamps together the 2 halves of SecY. May contact the channel plug during translocation. The chain is Protein translocase subunit SecE from Methanococcus maripaludis (strain DSM 14266 / JCM 13030 / NBRC 101832 / S2 / LL).